We begin with the raw amino-acid sequence, 467 residues long: MLMSWSPEECRDQGEPQGDRYSLCAKLVEKPDRGSEEHLEPGLGPIIIRSASGPTLAFWQAVLVGDVGSVSRILSDSSTGLAPDSIFDTSDPERWRDYRFNIRALRLWSLTYEEELTTPLHVAASRGHTEVLELLLRRRAKPDSAPGGRTALHEACSAGHAACVRVLLVAGADPNTLDQDGKRPLHLCRGPGILECVELLLKFGAQVDGRTEDEEETPLHIAARLGHVELADLLLRWGACPDVRNSEGWTPLLAACDIRCQSPKDAEATTNRCFQLCRLLLSVGADADAANQDKQRPLHLACRHGHSAVVQLLLSCGVNANAMDYGGHTPLHCALLGPTTAVAHSPEHTVRDLLNHGAVRVWPGALPKVLDRWCMSPRTIEVLMNTYRVVQLPEEAKGLVPPEILQKYHGFYSSLFALVRQPRSLQHLCRCALRSHLEGCLPHALPRLPLPPRMLRFLQLDFEDLLY.

ANK repeat units follow at residues 115-144 (ELTT…KPDS), 147-176 (GGRT…DPNT), 180-209 (DGKR…QVDG), 214-243 (EEET…CPDV), 247-289 (EGWT…DADA), 293-322 (DKQR…NANA), and 326-361 (GGHT…AVRV). In terms of domain architecture, SOCS box spans 412–467 (YSSLFALVRQPRSLQHLCRCALRSHLEGCLPHALPRLPLPPRMLRFLQLDFEDLLY).

The protein belongs to the ankyrin SOCS box (ASB) family.

The protein localises to the nucleus. The protein resides in the cytoplasm. It functions in the pathway protein modification; protein ubiquitination. In terms of biological role, may be a substrate-recognition component of a SCF-like ECS (Elongin-Cullin-SOCS-box protein) E3 ubiquitin-protein ligase complex which mediates the ubiquitination and subsequent proteasomal degradation of target proteins. This chain is Ankyrin repeat and SOCS box protein 10 (Asb10), found in Mus musculus (Mouse).